A 174-amino-acid chain; its full sequence is Nucleoside-triphosphatase THEP1 (174 aa).

ATP is bound by residues 15-22 (GMPGVGKT) and 102-109 (LAIVDEIG).

The protein belongs to the THEP1 NTPase family.

The catalysed reaction is a ribonucleoside 5'-triphosphate + H2O = a ribonucleoside 5'-diphosphate + phosphate + H(+). In terms of biological role, has nucleotide phosphatase activity towards ATP, GTP, CTP, TTP and UTP. May hydrolyze nucleoside diphosphates with lower efficiency. The sequence is that of Nucleoside-triphosphatase THEP1 from Pyrobaculum islandicum (strain DSM 4184 / JCM 9189 / GEO3).